Here is a 455-residue protein sequence, read N- to C-terminus: Ribulose bisphosphate carboxylase large chain (455 aa).

K5 is modified (N6,N6,N6-trimethyllysine). Substrate contacts are provided by N114 and T164. The Proton acceptor role is filled by K166. K168 contacts substrate. Residues K192, D194, and E195 each coordinate Mg(2+). K192 carries the post-translational modification N6-carboxylysine. H285 serves as the catalytic Proton acceptor. Substrate is bound by residues R286, H318, and S370.

This sequence belongs to the RuBisCO large chain family. Type I subfamily. As to quaternary structure, heterohexadecamer of 8 large chains and 8 small chains; disulfide-linked. The disulfide link is formed within the large subunit homodimers. Mg(2+) serves as cofactor. The disulfide bond which can form in the large chain dimeric partners within the hexadecamer appears to be associated with oxidative stress and protein turnover.

It localises to the plastid. The protein localises to the chloroplast. The enzyme catalyses 2 (2R)-3-phosphoglycerate + 2 H(+) = D-ribulose 1,5-bisphosphate + CO2 + H2O. The catalysed reaction is D-ribulose 1,5-bisphosphate + O2 = 2-phosphoglycolate + (2R)-3-phosphoglycerate + 2 H(+). RuBisCO catalyzes two reactions: the carboxylation of D-ribulose 1,5-bisphosphate, the primary event in carbon dioxide fixation, as well as the oxidative fragmentation of the pentose substrate in the photorespiration process. Both reactions occur simultaneously and in competition at the same active site. The chain is Ribulose bisphosphate carboxylase large chain from Lupinus luteus (European yellow lupine).